Reading from the N-terminus, the 258-residue chain is Proteasome subunit alpha type-3 (258 aa).

Residues lysine 100, lysine 199, and lysine 231 each participate in a glycyl lysine isopeptide (Lys-Gly) (interchain with G-Cter in ubiquitin) cross-link.

The protein belongs to the peptidase T1A family. The 26S proteasome consists of a 20S proteasome core and two 19S regulatory subunits. The 20S proteasome core is composed of 28 subunits that are arranged in four stacked rings, resulting in a barrel-shaped structure. The two end rings are each formed by seven alpha subunits, and the two central rings are each formed by seven beta subunits. The catalytic chamber with the active sites is on the inside of the barrel.

It localises to the cytoplasm. The protein resides in the nucleus. Its function is as follows. The proteasome degrades poly-ubiquitinated proteins in the cytoplasm and in the nucleus. It is essential for the regulated turnover of proteins and for the removal of misfolded proteins. The proteasome is a multicatalytic proteinase complex that is characterized by its ability to cleave peptides with Arg, Phe, Tyr, Leu, and Glu adjacent to the leaving group at neutral or slightly basic pH. It has an ATP-dependent proteolytic activity. This Saccharomyces cerevisiae (strain ATCC 204508 / S288c) (Baker's yeast) protein is Proteasome subunit alpha type-3 (PRE9).